The chain runs to 722 residues: Transcription factor kayak, isoforms D/sro (722 aa).

Residues 173-188 (QHQTQQQHQSQQQQQH) are compositionally biased toward low complexity. 3 disordered regions span residues 173–193 (QHQT…RQDY), 283–317 (LGQG…HTDS), and 350–407 (GSAS…KRRV). Residues 283-300 (LGQGSESEDSNASYNDTQ) are compositionally biased toward polar residues. Composition is skewed to low complexity over residues 308 to 317 (TDTSSAHTDS) and 350 to 364 (GSAS…TSNT). Residues 385-448 (EQKRAVRRER…NQLEYLLATH (64 aa)) enclose the bZIP domain. Residues 387–406 (KRAVRRERNKQAAARCRKRR) are basic motif. Positions 413–420 (LTEEVEQL) are leucine-zipper. Over residues 477-498 (AGSSGSGASSHHNHNSNDSSNG) the composition is skewed to low complexity. 2 disordered regions span residues 477 to 519 (AGSS…PLDL) and 683 to 722 (DGGT…LVSL). A compositionally biased stretch (polar residues) spans 506 to 516 (TLNSTGRSNSP). Phosphoserine is present on Ser-515.

It belongs to the bZIP family. Fos subfamily. Homodimer. Heterodimer with Jra. The kay-Jra heterodimer binds more stably to the AP-1 site than either of the two proteins alone.

Its subcellular location is the nucleus. In terms of biological role, developmentally regulated transcription factor AP-1 binds and recognizes the enhancer DNA sequence: 5'-TGA[CG]TCA-3'. May play a role in the function or determination of a particular subset of cells in the developing embryo. It is able to carry out its function either independently of or in conjunction with Jra. The sequence is that of Transcription factor kayak, isoforms D/sro from Drosophila melanogaster (Fruit fly).